Here is a 197-residue protein sequence, read N- to C-terminus: MILSDRDIIAALKSGRIKITPEPDLETQLGACSIDLHLGNTFMVFEHSRFSYIDPRQPQSIGDAMRTIVVPDGEPFIMQAGDFALASTREYIELADDLVGRLEGRSSIARLGITVHSTAALFEPGWAGTATMELSNLGRMAVALYPGMRICSFTFEQLSSPAMVPYRMKRGNKYAGQKDPKPSRLAEELSLEQLRGR.

105-110 (RSSIAR) serves as a coordination point for dCTP. E133 acts as the Proton donor/acceptor in catalysis. DCTP is bound by residues Y166 and Q177. Residues 172-197 (NKYAGQKDPKPSRLAEELSLEQLRGR) form a disordered region. Positions 176–187 (GQKDPKPSRLAE) are enriched in basic and acidic residues.

It belongs to the dCTP deaminase family. As to quaternary structure, homotrimer.

The enzyme catalyses dCTP + H2O + H(+) = dUTP + NH4(+). It participates in pyrimidine metabolism; dUMP biosynthesis; dUMP from dCTP (dUTP route): step 1/2. Functionally, catalyzes the deamination of dCTP to dUTP. In Thermomicrobium roseum (strain ATCC 27502 / DSM 5159 / P-2), this protein is dCTP deaminase.